A 157-amino-acid chain; its full sequence is Molybdopterin synthase catalytic subunit (157 aa).

Residues 103-104 (HR), Lys119, and 126-128 (KKE) each bind substrate.

The protein belongs to the MoaE family. MOCS2B subfamily. In terms of assembly, heterotetramer; composed of 2 small (MOCS2A) and 2 large (MOCS2B) subunits.

The protein resides in the cytoplasm. It catalyses the reaction 2 [molybdopterin-synthase sulfur-carrier protein]-C-terminal-Gly-aminoethanethioate + cyclic pyranopterin phosphate + H2O = molybdopterin + 2 [molybdopterin-synthase sulfur-carrier protein]-C-terminal Gly-Gly + 2 H(+). It functions in the pathway cofactor biosynthesis; molybdopterin biosynthesis. Catalytic subunit of the molybdopterin synthase complex, a complex that catalyzes the conversion of precursor Z into molybdopterin. Acts by mediating the incorporation of 2 sulfur atoms from thiocarboxylated MOCS2A into precursor Z to generate a dithiolene group. The protein is Molybdopterin synthase catalytic subunit of Culex quinquefasciatus (Southern house mosquito).